The sequence spans 90 residues: Potassium channel toxin BmTXK-beta (90 aa).

The first 22 residues, 1 to 22 (MMKQQFFLFLAVIVMISSVIEA), serve as a signal peptide directing secretion. A propeptide spanning residues 23-29 (GRGKEIM) is cleaved from the precursor. One can recognise a BetaSPN-type CS-alpha/beta domain in the interval 55 to 90 (EYACPVIEKWCEDHCAAKKAIGKCEDTECKCLKLRK). 3 cysteine pairs are disulfide-bonded: Cys58–Cys78, Cys65–Cys83, and Cys69–Cys85.

It belongs to the long chain scorpion toxin family. Class 2 subfamily. Expressed by the venom gland.

The protein localises to the secreted. Its function is as follows. This recombinant peptide reversibly and dose-dependently inhibits the transient outward potassium current (I(To)) of rabbit atrial myocyte and prolongs the action potential duration of rabbit atrial myocyte without affecting the action potential amplitude. Thus, the voltage-gated potassium channels Kv4.1/KCND1, Kv4.2/KCND2, Kv4.3/KCND3 may be the target of this toxin. This chain is Potassium channel toxin BmTXK-beta, found in Olivierus martensii (Manchurian scorpion).